We begin with the raw amino-acid sequence, 37 residues long: Esculentin-2B (37 aa).

A disulfide bond links Cys31 and Cys37.

Belongs to the frog skin active peptide (FSAP) family. Esculentin subfamily. In terms of tissue distribution, expressed by the skin glands.

Its subcellular location is the secreted. Its function is as follows. Shows antibacterial activity against representative Gram-negative and Gram-positive bacterial species, and hemolytic activity. This Pelophylax lessonae (Pool frog) protein is Esculentin-2B.